A 518-amino-acid polypeptide reads, in one-letter code: Bifunctional enzyme NanE/NanK (518 aa).

Residues 1–234 are manNAc-6-P epimerase; that stretch reads MCRVQGMIEE…DAVESAAKPS (234 aa). The interval 235–518 is manNAc kinase; sequence SPVLAFDIGG…VADLAATYFS (284 aa). ATP-binding positions include 239-246 and 365-372; these read AFDIGGTK and GIGGGIVL.

It in the N-terminal section; belongs to the NanE family. This sequence in the C-terminal section; belongs to the ROK (NagC/XylR) family. NanK subfamily.

The catalysed reaction is an N-acyl-D-glucosamine 6-phosphate = an N-acyl-D-mannosamine 6-phosphate. It catalyses the reaction an N-acyl-D-mannosamine + ATP = an N-acyl-D-mannosamine 6-phosphate + ADP + H(+). Its pathway is amino-sugar metabolism; N-acetylneuraminate degradation; D-fructose 6-phosphate from N-acetylneuraminate: step 2/5. It participates in amino-sugar metabolism; N-acetylneuraminate degradation; D-fructose 6-phosphate from N-acetylneuraminate: step 3/5. Functionally, converts N-acetylmannosamine-6-phosphate (ManNAc-6-P) to N-acetylglucosamine-6-phosphate (GlcNAc-6-P). Catalyzes the phosphorylation of N-acetylmannosamine (ManNAc) to ManNAc-6-P. This chain is Bifunctional enzyme NanE/NanK (nanEK), found in Brucella melitensis biotype 1 (strain ATCC 23456 / CCUG 17765 / NCTC 10094 / 16M).